Reading from the N-terminus, the 211-residue chain is Superoxide dismutase [Fe] (211 aa).

His34, His85, Asp171, and His175 together coordinate Fe cation.

This sequence belongs to the iron/manganese superoxide dismutase family. Requires Fe cation as cofactor.

It carries out the reaction 2 superoxide + 2 H(+) = H2O2 + O2. Its function is as follows. Destroys superoxide anion radicals which are normally produced within the cells and which are toxic to biological systems. The sequence is that of Superoxide dismutase [Fe] (sod) from Acidianus ambivalens (Desulfurolobus ambivalens).